Here is a 621-residue protein sequence, read N- to C-terminus: MFDLKEKLRTLPEKPGVYMMRNDKNEIIYVGKAISLKNRVRQYFQSSKNHPPKVKAMVSHIVTFEYIVTDTELEALILECNLIKENRPKYNVLLRDDKTYPYIKITTNEEYPRILKTRKVIKDKAKYFGPYTNIGALNETLDVIHTIYPIRTCNKNIERMIANKERPCLNYHIKKCIGPCTGLVTKEEYHQMIHDIILFLDGKEDELVRKIEEKMKAAAISMDFENAARYRDQIIALNNIVEKQKIVSVAEQDQDVIAMAKNEGNTWIQVFFIRKGKLVQREHFILKDTEDDSNQEIIASFLKQFYSGATFVPKEILIEESVEDLNVLEEWLSGKRGNKVSIKVPQKGDKKELLDMVKKNALMTMEQATTVIQLEKEKTEDTLIELAQLLDLEEVPYRIESYDISNIQGVESVGSMVVFEGGKSKNKDYRRFKIKTVKGPNDYASLEEIITRRFKRGLEETQDIIEQSLEVSEGKFAIFPDLIMVDGGFGQVTSVKKALHSLNLNIPVCGMIKDDRHRTKGLVYEGEELSIEKTSHLFRLITKIQDEVHRFAITYHRSLRKKTTLQSILEEIPGVGEARRKALMIHFGSIDKIKNATVEELLEVQGMNRKVAENIVEYLNK.

In terms of domain architecture, GIY-YIG spans 13–92 (EKPGVYMMRN…IKENRPKYNV (80 aa)). The 36-residue stretch at 205–240 (DELVRKIEEKMKAAAISMDFENAARYRDQIIALNNI) folds into the UVR domain.

Belongs to the UvrC family. In terms of assembly, interacts with UvrB in an incision complex.

The protein localises to the cytoplasm. The UvrABC repair system catalyzes the recognition and processing of DNA lesions. UvrC both incises the 5' and 3' sides of the lesion. The N-terminal half is responsible for the 3' incision and the C-terminal half is responsible for the 5' incision. The polypeptide is UvrABC system protein C (Alkaliphilus oremlandii (strain OhILAs) (Clostridium oremlandii (strain OhILAs))).